Consider the following 158-residue polypeptide: Ribonuclease H (158 aa).

The 142-residue stretch at 3-144 folds into the RNase H type-1 domain; it reads ELKLIHIFTD…CDQLARAAAE (142 aa). Mg(2+)-binding residues include Asp12, Glu50, Asp72, and Asp136.

Belongs to the RNase H family. Monomer. It depends on Mg(2+) as a cofactor.

It localises to the cytoplasm. It carries out the reaction Endonucleolytic cleavage to 5'-phosphomonoester.. Endonuclease that specifically degrades the RNA of RNA-DNA hybrids. The polypeptide is Ribonuclease H (Shewanella sp. (strain MR-7)).